Consider the following 164-residue polypeptide: Class I hydrophobin rodA (164 aa).

Residues 1–18 (MQFSISALVLGLAATVYA) form the signal peptide. A glycan (N-linked (GlcNAc...) asparagine) is linked at N50. Disulfide bonds link C60/C138, C68/C132, C69/C109, and C139/C157.

The protein belongs to the fungal hydrophobin family. As to quaternary structure, self-assembles to form functional amyloid fibrils called rodlets. Self-assembly into fibrillar rodlets occurs spontaneously at hydrophobic:hydrophilic interfaces and the rodlets further associate laterally to form amphipathic monolayers.

It is found in the secreted. The protein resides in the cell wall. Its function is as follows. Aerial growth, conidiation, and dispersal of filamentous fungi in the environment rely upon a capability of their secreting small amphipathic proteins called hydrophobins (HPBs) with low sequence identity. Class I can self-assemble into an outermost layer of rodlet bundles on aerial cell surfaces, conferring cellular hydrophobicity that supports fungal growth, development and dispersal; whereas Class II form highly ordered films at water-air interfaces through intermolecular interactions but contribute nothing to the rodlet structure. RodA is a class I hydrophobin involved in the cell surface hydrophobicity. The surface rodlet layer of the conidial cell wall makes airborne conidia of filamentous fungi inert to both innate and adaptive immunity. This Penicillium camemberti (strain FM 013) protein is Class I hydrophobin rodA.